The sequence spans 3722 residues: Vitelline envelope sperm lysin receptor (3722 aa).

A signal peptide spans 1 to 24 (MSGMQWSFGFSCLFFLKTVWICQA). Topologically, residues 25–3698 (FDADTPDPRV…TPSTDMATVQ (3674 aa)) are extracellular. 2 cysteine pairs are disulfide-bonded: C43–C141 and C72–C104. Residues 77–155 (MQMTRGRGIN…SQASNAPEPK (79 aa)) form a VERL 1 repeat. Residues N115, N122, and N142 are each glycosylated (N-linked (GlcNAc...) asparagine). Residues 146–169 (SQASNAPEPKASPTSSTPQPEAAS) form a disordered region. The segment covering 157 to 169 (SPTSSTPQPEAAS) has biased composition (polar residues). N171 carries an N-linked (GlcNAc...) asparagine glycan. Disulfide bonds link C182-C280 and C211-C243. The VERL 2 repeat unit spans residues 216 to 293 (VPITHEHGFN…KSPDAPKPES (78 aa)). N-linked (GlcNAc...) asparagine glycosylation occurs at N254. The disordered stretch occupies residues 279 to 335 (QCYMPKSPDAPKPESCLSSPPEPEASPSSNAPEPETYPTSSAPEKVSSDQPAPSHNQ). The segment covering 291–312 (PESCLSSPPEPEASPSSNAPEP) has biased composition (low complexity). A compositionally biased stretch (polar residues) spans 315-335 (YPTSSAPEKVSSDQPAPSHNQ). N-linked (GlcNAc...) asparagine glycans are attached at residues N334 and N373. Disulfide bonds link C345/C443 and C374/C406. The VERL 3 repeat unit spans residues 379–455 (VPITQEFGIN…PKSPVAPKPE (77 aa)). N-linked (GlcNAc...) asparagine glycans are attached at residues N417, N438, N487, N501, N526, N570, N591, N640, N654, N679, N723, N744, N793, N807, N832, N876, N897, N946, N960, N985, N1029, N1050, N1099, N1113, N1138, N1182, N1203, N1252, N1266, N1291, N1335, N1356, N1405, N1419, N1443, and N1487. The tract at residues 443 to 488 (CYMPKSPVAPKPETGPTSNAPEPETYPTSSAPEKVSSDQPAPSHNQ) is disordered. Residues 457–488 (GPTSNAPEPETYPTSSAPEKVSSDQPAPSHNQ) show a composition bias toward polar residues. A VERL 4 repeat occupies 532-608 (VPITQEFGIN…PKSPVAPKPE (77 aa)). Positions 603–641 (VAPKPETGPTSNAPEPETYPTSSAPEKVSSDQPAPSHNQ) are disordered. Residues 610–641 (GPTSNAPEPETYPTSSAPEKVSSDQPAPSHNQ) are compositionally biased toward polar residues. A VERL 5 repeat occupies 685–761 (VPITQEFGIN…PKSPVAPKPE (77 aa)). The disordered stretch occupies residues 756–794 (VAPKPETGPSSNAPEPETYPTSSAPEKVSSDQPAPSHNQ). The segment covering 763-794 (GPSSNAPEPETYPTSSAPEKVSSDQPAPSHNQ) has biased composition (polar residues). The VERL 6 repeat unit spans residues 838–914 (VPITQEFGIN…PKSPVAPKPE (77 aa)). The tract at residues 909 to 947 (VAPKPETGPTSNAPEPETYPTSSAPEKVSSDQPAPSHNQ) is disordered. A compositionally biased stretch (polar residues) spans 916–947 (GPTSNAPEPETYPTSSAPEKVSSDQPAPSHNQ). Residues 991 to 1067 (VPITHEFGIN…PKSPVAPKPE (77 aa)) form a VERL 7 repeat. The disordered stretch occupies residues 1062 to 1100 (VAPKPETGPTSNAPEPETYPTSSAPEKVSSDQPAPSHNQ). The segment covering 1069-1100 (GPTSNAPEPETYPTSSAPEKVSSDQPAPSHNQ) has biased composition (polar residues). Residues 1144-1220 (VPITQEFGIN…PKSPVAPKPE (77 aa)) form a VERL 8 repeat. The disordered stretch occupies residues 1215-1253 (VAPKPETGPTSNAPEPETYPTSSAPEKVSSDQPAPSHNQ). The span at 1222–1253 (GPTSNAPEPETYPTSSAPEKVSSDQPAPSHNQ) shows a compositional bias: polar residues. The stretch at 1297-1373 (VPITHKFGIN…PKSPVAHKPE (77 aa)) is one VERL 9 repeat. The disordered stretch occupies residues 1368 to 1406 (VAHKPETGPTSNAPEPETYPTSSAPEKVSSDQPAPSHNQ). The span at 1375 to 1406 (GPTSNAPEPETYPTSSAPEKVSSDQPAPSHNQ) shows a compositional bias: polar residues. One copy of the VERL 10 repeat lies at 1449-1525 (VPITHEFGIN…PKSPVAPKPE (77 aa)). The segment at 1519–1556 (PVAPKPETGPSSNAPEPETYPTSSAPEKVYSDQPAPSH) is disordered. The segment covering 1527–1543 (GPSSNAPEPETYPTSSA) has biased composition (polar residues). N-linked (GlcNAc...) asparagine glycans are attached at residues N1557, N1571, N1596, N1640, N1661, N1710, N1724, N1749, N1793, N1814, N1863, N1877, N1902, N1946, N1967, N2016, N2030, N2055, N2099, N2120, N2169, N2183, N2208, N2252, N2273, N2322, N2336, N2361, N2405, N2426, N2475, N2489, N2514, N2558, N2579, N2628, N2642, N2667, N2711, N2732, N2781, N2795, N2820, N2864, N2885, N2934, N2948, N2973, N3017, N3038, N3087, N3101, N3126, N3170, N3191, N3229, N3243, N3268, N3312, and N3333. The VERL 11 repeat unit spans residues 1602–1678 (VPITHEFGIN…PKSPVAPKPE (77 aa)). The segment at 1672-1711 (PVAPKPETGPTSNAPEPQTYPTSSAPEKVSSDQPAPSHNQ) is disordered. Positions 1680–1711 (GPTSNAPEPQTYPTSSAPEKVSSDQPAPSHNQ) are enriched in polar residues. The stretch at 1755–1831 (VPITQEFGIN…PKSPVAPKPE (77 aa)) is one VERL 12 repeat. A disordered region spans residues 1826–1864 (VAPKPETGPTSNAPEPETYPTSSAPEKVSSDQPAPSHNQ). The span at 1833–1864 (GPTSNAPEPETYPTSSAPEKVSSDQPAPSHNQ) shows a compositional bias: polar residues. One copy of the VERL 13 repeat lies at 1908 to 1984 (VPITHEFGIN…PKSPVAPKPE (77 aa)). Residues 1979-2017 (VAPKPETGPTSNAPEPETYPTSSAPEKVSSDQPAPSHNQ) form a disordered region. Residues 1986 to 2017 (GPTSNAPEPETYPTSSAPEKVSSDQPAPSHNQ) are compositionally biased toward polar residues. One copy of the VERL 14 repeat lies at 2061–2137 (VPITQEFGIN…PKSPVAPKPE (77 aa)). Residues 2132 to 2170 (VAPKPETGPTSNAPEPETYPTSSAPEKVSSDQPAPSHNQ) are disordered. The segment covering 2139 to 2170 (GPTSNAPEPETYPTSSAPEKVSSDQPAPSHNQ) has biased composition (polar residues). Residues 2214 to 2290 (VPITQEFGIN…PKSPVAPKPE (77 aa)) form a VERL 15 repeat. The disordered stretch occupies residues 2285–2323 (VAPKPETGPTSNAPEPETYPTSSAPEKVSSDQPAPSHNQ). Residues 2292 to 2323 (GPTSNAPEPETYPTSSAPEKVSSDQPAPSHNQ) are compositionally biased toward polar residues. Residues 2367–2443 (VPITQEFGIN…PKSPVAPKPE (77 aa)) form a VERL 16 repeat. The interval 2438–2476 (VAPKPETGPTSNAPEPETYPTSSAPEKVSSDQPAPSHNQ) is disordered. A compositionally biased stretch (polar residues) spans 2445 to 2476 (GPTSNAPEPETYPTSSAPEKVSSDQPAPSHNQ). One copy of the VERL 17 repeat lies at 2520-2596 (VPITQEFGIN…PKSPVAPKPE (77 aa)). A disordered region spans residues 2590 to 2629 (PVAPKPETGPTSNAPEPQTYPTSSAPEKVSSDQPAPSHNQ). A compositionally biased stretch (polar residues) spans 2598-2629 (GPTSNAPEPQTYPTSSAPEKVSSDQPAPSHNQ). The stretch at 2673–2749 (VPITQEFGIN…PKSPVAPKPE (77 aa)) is one VERL 18 repeat. A disordered region spans residues 2744 to 2782 (VAPKPETGPTSNAPEPETYPTSSAPEKVSSDQPAPSHNQ). The segment covering 2751–2782 (GPTSNAPEPETYPTSSAPEKVSSDQPAPSHNQ) has biased composition (polar residues). Residues 2826–2902 (VPITHEFGIN…PKSPVAPKPE (77 aa)) form a VERL 19 repeat. The disordered stretch occupies residues 2897–2935 (VAPKPETGPTSNAPEPQTYPTSSAPEKVSSDQPAPSHNQ). Positions 2904 to 2935 (GPTSNAPEPQTYPTSSAPEKVSSDQPAPSHNQ) are enriched in polar residues. The stretch at 2979 to 3055 (VPITQEFGIN…PKSPVAPKPE (77 aa)) is one VERL 20 repeat. The interval 3050 to 3088 (VAPKPETGPTSNAPEPETYPTSSAPEKVSSDQPAPSHNQ) is disordered. Over residues 3057 to 3088 (GPTSNAPEPETYPTSSAPEKVSSDQPAPSHNQ) the composition is skewed to polar residues. A VERL 21 repeat occupies 3132 to 3208 (VPITQEFGIN…PKSPVAPKPE (77 aa)). The disordered stretch occupies residues 3205–3230 (PKPETYPTSSAPEKVSSDQPAPSHNQ). Residues 3210–3230 (YPTSSAPEKVSSDQPAPSHNQ) are compositionally biased toward polar residues. A VERL 22 repeat occupies 3274-3351 (VPITHEFGIN…KSPVAPKPEA (78 aa)). Positions 3345–3407 (VAPKPEASPT…RKSNQTTSTE (63 aa)) are disordered. A compositionally biased stretch (polar residues) spans 3352–3375 (SPTSNAPEPQTYPTSSAPGTSPEG). N-linked (GlcNAc...) asparagine glycans are attached at residues N3388, N3401, N3449, N3456, N3559, and N3650. The ZP domain occupies 3408 to 3670 (DVLDDTSNYI…SSCSNQRRTR (263 aa)). A helical transmembrane segment spans residues 3699–3719 (VALLVAVALLITQLAGLAIYV). Over 3720–3722 (NIN) the chain is Cytoplasmic.

May form disulfide-linked homodimers. Interacts (via VERL repeats) with sperm lysin. Each VERL chain can bind numerous lysin molecules. N-glycosylated. About half of the glycoprotein mass corresponds to carbohydrate chains. N-glycosylation is not required for lysin binding. In terms of processing, O-glycosylated. O-glycosylation is not required for lysin binding.

It localises to the cell membrane. It is found in the secreted. Its subcellular location is the extracellular space. The protein resides in the extracellular matrix. Structural component of the egg vitelline envelope; forms long filaments. Functions as a species-specific receptor for the sperm protein lysin; prevents fertilization by sperm from other species. Each VERL chain can bind multiple copies of the sperm protein lysin; this creates a 3 um hole in the egg vitelline envelope through which the sperm passes. The protein is Vitelline envelope sperm lysin receptor of Haliotis rufescens (California red abalone).